We begin with the raw amino-acid sequence, 347 residues long: MDIKEELEELKKKVSVEIDKSSSVDLIENIRVHLLGKKGDLTKILKGLKDLDPREKPVVGQMANKIRTQLETMISQKKHILEENKLDAQLASEKIDVTLPGETFQIGTKHVLQQIQDQIEDHFLSQGYQVMYGREIETDEYNFERMNLPKDHPARGMQDTFYLTPNVLLRTQTSAMQARAMDKHDFSTGPLKMISPGKVYRRDNDDATHSHQFHQIEGLVVGKKITLADLKGTLQALTDELFGKGHAMRFRQSYFPFTEPSLEVDISWNTVDKNTASQDIEWIEVLGAGMVHPNVLKMANIDPEEYSGFAFGLGPDRFAMIKYGIDDIRNFYLDDLRFLKQFCQVGE.

Glu-259 serves as a coordination point for Mg(2+).

Belongs to the class-II aminoacyl-tRNA synthetase family. Phe-tRNA synthetase alpha subunit type 1 subfamily. In terms of assembly, tetramer of two alpha and two beta subunits. It depends on Mg(2+) as a cofactor.

The protein resides in the cytoplasm. The catalysed reaction is tRNA(Phe) + L-phenylalanine + ATP = L-phenylalanyl-tRNA(Phe) + AMP + diphosphate + H(+). The chain is Phenylalanine--tRNA ligase alpha subunit from Oenococcus oeni (strain ATCC BAA-331 / PSU-1).